Reading from the N-terminus, the 290-residue chain is Putative beta-lactamase HcpC (290 aa).

A signal peptide spans M1 to A25. TPR repeat units follow at residues P29–S62, C64–N98, C100–A133, E134–D170, C172–S205, P206–G242, and C244–G278. Intrachain disulfides connect C56/C64, C92/C100, C128/C136, C164/C172, C200/C208, C236/C244, and C272/C280.

It belongs to the hcp beta-lactamase family.

The protein resides in the secreted. The catalysed reaction is a beta-lactam + H2O = a substituted beta-amino acid. In terms of biological role, may hydrolyze 6-aminopenicillinic acid and 7-aminocephalosporanic acid (ACA) derivatives. The protein is Putative beta-lactamase HcpC (hcpC) of Helicobacter pylori (strain ATCC 700392 / 26695) (Campylobacter pylori).